The following is a 683-amino-acid chain: Amphiphysin (683 aa).

Coiled-coil stretches lie at residues 10 to 83 (AKNV…SLHE) and 144 to 191 (DYDS…QEEL). In terms of domain architecture, BAR spans 24–240 (VLQKLGKADE…MTKLGDQHAD (217 aa)). Disordered stretches follow at residues 244–311 (SIQG…KVTP), 421–443 (AETEQALPTEPQAEEPPTTAAAP), and 455–599 (EPKE…ASLS). At S252 the chain carries Phosphoserine. Phosphothreonine is present on T260. A compositionally biased stretch (pro residues) spans 261–274 (PSPPEEASPLPSPT). Phosphoserine is present on residues S262, S268, S272, and S276. T280 carries the post-translational modification Phosphothreonine. Composition is skewed to low complexity over residues 424-443 (EQALPTEPQAEEPPTTAAAP) and 468-477 (AGETVGTEGS). At S496 the chain carries Phosphoserine. Over residues 539–559 (SNHEGEEHQETTTGTETREAT) the composition is skewed to basic and acidic residues. The span at 585-596 (AATPAPAGAVDA) shows a compositional bias: low complexity. Positions 610-683 (GFLYKVETLH…FPENFTRHLE (74 aa)) constitute an SH3 domain. Position 626 is a phosphoserine (S626).

Heterodimer with BIN1. Binds SH3GLB1. Interacts with REPS1 and SGIP1. Binds AP2A2. Interacts with AP2B1. Interacts with DNM1 and SYNJ1.

It is found in the cytoplasmic vesicle. The protein localises to the secretory vesicle. It localises to the synaptic vesicle membrane. Its subcellular location is the cytoplasm. The protein resides in the cytoskeleton. May participate in mechanisms of regulated exocytosis in synapses and certain endocrine cell types. May control the properties of the membrane associated cytoskeleton. The polypeptide is Amphiphysin (Amph) (Rattus norvegicus (Rat)).